Consider the following 60-residue polypeptide: UPF0434 protein PM0859 (60 aa).

The protein belongs to the UPF0434 family.

This Pasteurella multocida (strain Pm70) protein is UPF0434 protein PM0859.